Reading from the N-terminus, the 293-residue chain is Pantothenate synthetase (293 aa).

30–37 contacts ATP; that stretch reads MGYLHKGH. His-37 (proton donor) is an active-site residue. Gln-61 provides a ligand contact to (R)-pantoate. Gln-61 provides a ligand contact to beta-alanine. 147–150 provides a ligand contact to ATP; the sequence is GEKD. Position 153 (Gln-153) interacts with (R)-pantoate. ATP contacts are provided by residues Val-176 and 184–187; that span reads CSSR.

This sequence belongs to the pantothenate synthetase family. As to quaternary structure, homodimer.

The protein resides in the cytoplasm. It carries out the reaction (R)-pantoate + beta-alanine + ATP = (R)-pantothenate + AMP + diphosphate + H(+). Its pathway is cofactor biosynthesis; (R)-pantothenate biosynthesis; (R)-pantothenate from (R)-pantoate and beta-alanine: step 1/1. In terms of biological role, catalyzes the condensation of pantoate with beta-alanine in an ATP-dependent reaction via a pantoyl-adenylate intermediate. The protein is Pantothenate synthetase of Brucella canis (strain ATCC 23365 / NCTC 10854 / RM-666).